We begin with the raw amino-acid sequence, 365 residues long: Heme A synthase (365 aa).

8 consecutive transmembrane segments (helical) span residues 17-37 (AVRIWLTVVAALIAVMVLVGG), 107-127 (VIGIAYLLPFLWFLWRGAIGP), 132-152 (ALWGIFALGALQGAVGWWMVA), 164-184 (VRLAVHLTLALIIYAAIVWTL), 203-223 (AIALLALTLLQLFLGALVAGL), 264-283 (QFDHRMMAYALWALAAWHAI), 296-316 (GALWLFAALSLQAVLGILTVL), and 320-340 (PIGLALAHQAVGIVVLTLAVL). His267 serves as a coordination point for heme. His327 is a heme binding site.

Belongs to the COX15/CtaA family. Type 2 subfamily. As to quaternary structure, interacts with CtaB. The cofactor is heme b.

It is found in the cell membrane. It catalyses the reaction Fe(II)-heme o + 2 A + H2O = Fe(II)-heme a + 2 AH2. It functions in the pathway porphyrin-containing compound metabolism; heme A biosynthesis; heme A from heme O: step 1/1. In terms of biological role, catalyzes the conversion of heme O to heme A by two successive hydroxylations of the methyl group at C8. The first hydroxylation forms heme I, the second hydroxylation results in an unstable dihydroxymethyl group, which spontaneously dehydrates, resulting in the formyl group of heme A. The sequence is that of Heme A synthase from Rhodopseudomonas palustris (strain HaA2).